A 415-amino-acid chain; its full sequence is Beta-2 adrenergic receptor (415 aa).

Over 1–34 (MGQPANRSVFLLAPNGSHAPDQGDSQERSEAWVV) the chain is Extracellular. Asn6 and Asn15 each carry an N-linked (GlcNAc...) asparagine glycan. Residues 35 to 58 (GMGIVMSLIVLAIVFGNVLVITAI) form a helical membrane-spanning segment. Over 59 to 71 (ARFERLQTVTNYF) the chain is Cytoplasmic. A helical membrane pass occupies residues 72 to 95 (ITSLACADLVMGLAVVPFGASHIL). Residues 96-106 (MKMWTFGNFWC) are Extracellular-facing. 2 disulfide bridges follow: Cys106–Cys191 and Cys184–Cys190. The chain crosses the membrane as a helical span at residues 107–129 (EFWTSIDVLCVTASIETLCVIAV). The Cytoplasmic portion of the chain corresponds to 130-150 (DRYFAITSPFKYQSLLTKNKA). A Phosphotyrosine modification is found at Tyr141. Residues 151-174 (RVVILMVWIVSGLTSFLPIQMHWY) form a helical membrane-spanning segment. The Extracellular portion of the chain corresponds to 175-196 (RATHQEAINCYAKETCCDFFTN). Residues 197–220 (QAYAIASSIVSFYLPLVVMVFVYS) form a helical membrane-spanning segment. The Cytoplasmic portion of the chain corresponds to 221–274 (RVFQVAQRQLQKIDRSEGRFHAQNLSQVEQDGRSGHGHRRSSKFCLKEHKALKT). Phosphoserine is present on Ser246. Residues Ser261 and Ser262 each carry the phosphoserine; by PKA modification. A lipid anchor (S-palmitoyl cysteine) is attached at Cys265. The helical transmembrane segment at 275-298 (LGIIMGTFTLCWLPFFIVNIVHVI) threads the bilayer. Topologically, residues 299-305 (QDNLIPK) are extracellular. A helical membrane pass occupies residues 306-329 (EVYILLNWVGYVNSAFNPLIYCRS). At 330-415 (PDFRIAFQEL…RNCSTNDSLL (86 aa)) the chain is on the cytoplasmic side. Residue Cys341 is the site of S-palmitoyl cysteine attachment. Phosphoserine; by PKA is present on residues Ser345 and Ser346. A Phosphoserine; by BARK modification is found at Ser355. The segment at 379-415 (SELLCEDPPGTEDRQGTVPSDSVDSQGRNCSTNDSLL) is disordered. Residues Pro387 and Pro397 each carry the 4-hydroxyproline modification. A compositionally biased stretch (polar residues) spans 395 to 415 (TVPSDSVDSQGRNCSTNDSLL). A PDZ-binding motif is present at residues 412–415 (DSLL).

It belongs to the G-protein coupled receptor 1 family. Adrenergic receptor subfamily. ADRB2 sub-subfamily. Binds NHERF1 and GPRASP1. Interacts with ARRB1 and ARRB2. Interacts with SRC. Interacts with USP20 and USP33. Interacts with VHL; the interaction, which is increased on hydroxylation of ADRB2, ubiquitinates ADRB2 leading to its degradation. Interacts with EGLN3; the interaction hydroxylates ADRB2 facilitating VHL-E3 ligase-mediated ubiquitination. Interacts (via PDZ-binding motif) with SNX27 (via PDZ domain); the interaction is required when endocytosed to prevent degradation in lysosomes and promote recycling to the plasma membrane. Interacts with CNIH4. Interacts with ARRDC3. Interacts with NEDD4. Interacts with MARCHF2. Post-translationally, palmitoylated; may reduce accessibility of Ser-345 and Ser-346 by anchoring Cys-341 to the plasma membrane. Agonist stimulation promotes depalmitoylation and further allows Ser-345 and Ser-346 phosphorylation. Phosphorylated by PKA and BARK upon agonist stimulation, which mediates homologous desensitization of the receptor. PKA-mediated phosphorylation seems to facilitate phosphorylation by BARK. In terms of processing, phosphorylation of Tyr-141 is induced by insulin and leads to supersensitization of the receptor. Post-translationally, polyubiquitinated. Agonist-induced ubiquitination leads to sort internalized receptors to the lysosomes for degradation. Deubiquitination by USP20 and USP33, leads to ADRB2 recycling and resensitization after prolonged agonist stimulation. USP20 and USP33 are constitutively associated and are dissociated immediately after agonist stimulation. Ubiquitination by the VHL-E3 ligase complex is oxygen-dependent. Hydroxylation by EGLN3 occurs only under normoxia and increases the interaction with VHL and the subsequent ubiquitination and degradation of ADRB2. In terms of processing, palmitoylated. Mainly palmitoylated at Cys-341. Palmitoylation may reduce accessibility of phosphorylation sites by anchoring the receptor to the plasma membrane. Agonist stimulation promotes depalmitoylation and further allows Ser-345 and Ser-346 phosphorylation. Also undergoes transient, ligand-induced palmitoylation at Cys-265 probably by ZDHHC9, ZDHHC14 and ZDHHC18 within the Golgi. Palmitoylation at Cys-265 requires phosphorylation by PKA and receptor internalization and stabilizes the receptor. Could be depalmitoylated by LYPLA1 at the plasma membrane.

It is found in the cell membrane. Its subcellular location is the early endosome. The protein resides in the golgi apparatus. Beta-adrenergic receptors mediate the catecholamine-induced activation of adenylate cyclase through the action of G proteins. The beta-2-adrenergic receptor binds epinephrine with an approximately 30-fold greater affinity than it does norepinephrine. The protein is Beta-2 adrenergic receptor (ADRB2) of Canis lupus familiaris (Dog).